A 985-amino-acid chain; its full sequence is Bifunctional glutamine synthetase adenylyltransferase/adenylyl-removing enzyme (985 aa).

The tract at residues 1–472 (MTSSAPGNAD…HYARLFEGDP (472 aa)) is adenylyl removase. The adenylyl transferase stretch occupies residues 477-985 (SLPPVNYGAG…RRVFTSLLEE (509 aa)).

This sequence belongs to the GlnE family. Requires Mg(2+) as cofactor.

It catalyses the reaction [glutamine synthetase]-O(4)-(5'-adenylyl)-L-tyrosine + phosphate = [glutamine synthetase]-L-tyrosine + ADP. It carries out the reaction [glutamine synthetase]-L-tyrosine + ATP = [glutamine synthetase]-O(4)-(5'-adenylyl)-L-tyrosine + diphosphate. Involved in the regulation of glutamine synthetase GlnA, a key enzyme in the process to assimilate ammonia. When cellular nitrogen levels are high, the C-terminal adenylyl transferase (AT) inactivates GlnA by covalent transfer of an adenylyl group from ATP to specific tyrosine residue of GlnA, thus reducing its activity. Conversely, when nitrogen levels are low, the N-terminal adenylyl removase (AR) activates GlnA by removing the adenylyl group by phosphorolysis, increasing its activity. The regulatory region of GlnE binds the signal transduction protein PII (GlnB) which indicates the nitrogen status of the cell. This Bradyrhizobium sp. (strain BTAi1 / ATCC BAA-1182) protein is Bifunctional glutamine synthetase adenylyltransferase/adenylyl-removing enzyme.